Here is a 361-residue protein sequence, read N- to C-terminus: Histidinol-phosphate aminotransferase (361 aa).

An N6-(pyridoxal phosphate)lysine modification is found at Lys223.

The protein belongs to the class-II pyridoxal-phosphate-dependent aminotransferase family. Histidinol-phosphate aminotransferase subfamily. In terms of assembly, homodimer. Pyridoxal 5'-phosphate is required as a cofactor.

It catalyses the reaction L-histidinol phosphate + 2-oxoglutarate = 3-(imidazol-4-yl)-2-oxopropyl phosphate + L-glutamate. It functions in the pathway amino-acid biosynthesis; L-histidine biosynthesis; L-histidine from 5-phospho-alpha-D-ribose 1-diphosphate: step 7/9. The chain is Histidinol-phosphate aminotransferase from Deinococcus radiodurans (strain ATCC 13939 / DSM 20539 / JCM 16871 / CCUG 27074 / LMG 4051 / NBRC 15346 / NCIMB 9279 / VKM B-1422 / R1).